Here is a 107-residue protein sequence, read N- to C-terminus: Replication restart protein PriB (107 aa).

The region spanning 1-97 (MNTLELSARV…LHLQQARRIA (97 aa)) is the SSB domain.

It belongs to the PriB family. Homodimer. Interacts with PriA and DnaT. Component of the replication restart primosome. Primosome assembly occurs via a 'hand-off' mechanism. PriA binds to replication forks, subsequently PriB then DnaT bind; DnaT then displaces ssDNA to generate the helicase loading substrate.

In terms of biological role, involved in the restart of stalled replication forks, which reloads the replicative helicase on sites other than the origin of replication; the PriA-PriB pathway is the major replication restart pathway. During primosome assembly it facilitates complex formation between PriA and DnaT on DNA; stabilizes PriA on DNA. Stimulates the DNA unwinding activity of PriA helicase. In Bordetella parapertussis (strain 12822 / ATCC BAA-587 / NCTC 13253), this protein is Replication restart protein PriB.